The following is a 201-amino-acid chain: ATP-dependent Clp protease proteolytic subunit 2 (201 aa).

The active-site Nucleophile is the Ser98. His123 is a catalytic residue.

This sequence belongs to the peptidase S14 family. Fourteen ClpP subunits assemble into 2 heptameric rings which stack back to back to give a disk-like structure with a central cavity, resembling the structure of eukaryotic proteasomes.

It localises to the cytoplasm. The catalysed reaction is Hydrolysis of proteins to small peptides in the presence of ATP and magnesium. alpha-casein is the usual test substrate. In the absence of ATP, only oligopeptides shorter than five residues are hydrolyzed (such as succinyl-Leu-Tyr-|-NHMec, and Leu-Tyr-Leu-|-Tyr-Trp, in which cleavage of the -Tyr-|-Leu- and -Tyr-|-Trp bonds also occurs).. Cleaves peptides in various proteins in a process that requires ATP hydrolysis. Has a chymotrypsin-like activity. Plays a major role in the degradation of misfolded proteins. The protein is ATP-dependent Clp protease proteolytic subunit 2 of Rhizobium johnstonii (strain DSM 114642 / LMG 32736 / 3841) (Rhizobium leguminosarum bv. viciae).